Reading from the N-terminus, the 272-residue chain is Acidic leucine-rich nuclear phosphoprotein 32 family member B (272 aa).

LRR repeat units lie at residues 16 to 40, 43 to 64, 65 to 84, and 89 to 110; these read PAAV…LTDE, NLEF…PKLP, KLKK…DRLA, and SLTH…EPLK. An LRRCT domain is found at 123 to 161; it reads CEVTNRSDYRETVFRLLPQLSYLDGYDREDQEAPDSDVE. Residues 149 to 254 are compositionally biased toward acidic residues; that stretch reads DREDQEAPDS…DEDEDEEEEE (106 aa). The disordered stretch occupies residues 149–272; sequence DREDQEAPDS…RETDDEGEDD (124 aa). Ser164 and Ser171 each carry phosphoserine. The span at 255–265 shows a compositional bias: basic and acidic residues; that stretch reads SGKGEKRKRET. Positions 260 to 263 match the Nuclear localization signal motif; the sequence is KRKR. At Thr265 the chain carries Phosphothreonine.

Belongs to the ANP32 family. In terms of assembly, interacts with histones H3 and H4. Interacts with KLF5; this interaction induces promoter region-specific histone incorporation and inhibition of histone acetylation by ANP32B. In terms of processing, some glutamate residues are glycylated by TTLL8. This modification occurs exclusively on glutamate residues and results in a glycine chain on the gamma-carboxyl group. Post-translationally, directly cleaved by caspase-3/CASP3. As to expression, predominantly expressed in brain. Expressed in the entire embryonic brain, whereas in the adult brain its expression is restricted to the subventricular zone where there are neural progenitor cells.

The protein resides in the nucleus. Functionally, multifunctional protein that is involved in the regulation of many processes including cell proliferation, apoptosis, cell cycle progression or transcription. Regulates the proliferation of neuronal stem cells, differentiation of leukemic cells and progression from G1 to S phase of the cell cycle. As negative regulator of caspase-3-dependent apoptosis, may act as an antagonist of ANP32A in regulating tissue homeostasis. Exhibits histone chaperone properties, able to recruit histones to certain promoters, thus regulating the transcription of specific genes. Also plays an essential role in the nucleocytoplasmic transport of specific mRNAs via the uncommon nuclear mRNA export receptor XPO1/CRM1. Participates in the regulation of adequate adaptive immune responses by acting on mRNA expression and cell proliferation. The polypeptide is Acidic leucine-rich nuclear phosphoprotein 32 family member B (Anp32b) (Rattus norvegicus (Rat)).